A 221-amino-acid chain; its full sequence is Bcl-2-related ovarian killer protein homolog A (221 aa).

A BH4 motif is present at residues 32-44; sequence KVLCRDYIHSRLH. Positions 64–80 match the BH3 motif; that stretch reads VSSVLLWLGDELEYLRP. Residues 110–140 carry the BH1 motif; it reads EIFSTEYSRKGLEKHKGVTWGKIVSLYAVAG. A BH2 motif is present at residues 173 to 187; it reads WLKKRGGWADITKCV. Residues 198–218 form a helical membrane-spanning segment; it reads WLVTAACACGHYLKAVVFYLL.

The protein belongs to the Bcl-2 family. As to expression, strongest expression in ovary and eye, weaker expression in gut, kidney and brain. Little expression in liver or heart.

It is found in the membrane. Its function is as follows. May play a role in apoptosis. Does not appear to show pro-apoptotic activity when expressed ectopically in early embryos. This Danio rerio (Zebrafish) protein is Bcl-2-related ovarian killer protein homolog A.